A 162-amino-acid polypeptide reads, in one-letter code: 6,7-dimethyl-8-ribityllumazine synthase (162 aa).

5-amino-6-(D-ribitylamino)uracil contacts are provided by residues F22, 56 to 58, and 80 to 82; these read TFE and AVI. 85–86 contributes to the (2S)-2-hydroxy-3-oxobutyl phosphate binding site; that stretch reads GT. The Proton donor role is filled by H88. M113 contributes to the 5-amino-6-(D-ribitylamino)uracil binding site. R127 contributes to the (2S)-2-hydroxy-3-oxobutyl phosphate binding site.

The protein belongs to the DMRL synthase family.

It carries out the reaction (2S)-2-hydroxy-3-oxobutyl phosphate + 5-amino-6-(D-ribitylamino)uracil = 6,7-dimethyl-8-(1-D-ribityl)lumazine + phosphate + 2 H2O + H(+). It functions in the pathway cofactor biosynthesis; riboflavin biosynthesis; riboflavin from 2-hydroxy-3-oxobutyl phosphate and 5-amino-6-(D-ribitylamino)uracil: step 1/2. In terms of biological role, catalyzes the formation of 6,7-dimethyl-8-ribityllumazine by condensation of 5-amino-6-(D-ribitylamino)uracil with 3,4-dihydroxy-2-butanone 4-phosphate. This is the penultimate step in the biosynthesis of riboflavin. The sequence is that of 6,7-dimethyl-8-ribityllumazine synthase from Anaeromyxobacter dehalogenans (strain 2CP-1 / ATCC BAA-258).